The chain runs to 84 residues: uncharacterized protein (84 aa).

This is an uncharacterized protein from Helicobacter pylori (strain ATCC 700392 / 26695) (Campylobacter pylori).